Consider the following 337-residue polypeptide: DNA-directed RNA polymerase subunit alpha (337 aa).

The alpha N-terminal domain (alpha-NTD) stretch occupies residues 1–226; sequence MLIAQRPTLT…ELFGLARELN (226 aa). An alpha C-terminal domain (alpha-CTD) region spans residues 243–337; the sequence is LAADLALEIE…DTSFAEDEQL (95 aa). Residues 315 to 337 are disordered; the sequence is FDPSAVVNDFEDDDTSFAEDEQL. Acidic residues predominate over residues 323–337; the sequence is DFEDDDTSFAEDEQL.

It belongs to the RNA polymerase alpha chain family. Homodimer. The RNAP catalytic core consists of 2 alpha, 1 beta, 1 beta' and 1 omega subunit. When a sigma factor is associated with the core the holoenzyme is formed, which can initiate transcription.

The enzyme catalyses RNA(n) + a ribonucleoside 5'-triphosphate = RNA(n+1) + diphosphate. DNA-dependent RNA polymerase catalyzes the transcription of DNA into RNA using the four ribonucleoside triphosphates as substrates. The polypeptide is DNA-directed RNA polymerase subunit alpha (Kineococcus radiotolerans (strain ATCC BAA-149 / DSM 14245 / SRS30216)).